A 261-amino-acid chain; its full sequence is Carnitinyl-CoA dehydratase (261 aa).

The active-site Nucleophile is the Glu111. Glu131 (proton acceptor) is an active-site residue.

It belongs to the enoyl-CoA hydratase/isomerase family.

It carries out the reaction (R)-carnitinyl-CoA = crotonobetainyl-CoA + H2O. Its pathway is amine and polyamine metabolism; carnitine metabolism. Functionally, catalyzes the reversible dehydration of L-carnitinyl-CoA to crotonobetainyl-CoA. The polypeptide is Carnitinyl-CoA dehydratase (Proteus mirabilis (strain HI4320)).